The chain runs to 101 residues: Small ribosomal subunit protein bS6 (101 aa).

Belongs to the bacterial ribosomal protein bS6 family.

Functionally, binds together with bS18 to 16S ribosomal RNA. The polypeptide is Small ribosomal subunit protein bS6 (Oleidesulfovibrio alaskensis (strain ATCC BAA-1058 / DSM 17464 / G20) (Desulfovibrio alaskensis)).